We begin with the raw amino-acid sequence, 138 residues long: Acidic phospholipase A2 BE-I-PLA2 (138 aa).

A signal peptide spans 1 to 16 (MRTLWIMAVLLVGVEG). 7 disulfide bridges follow: C42–C131, C44–C60, C59–C111, C65–C138, C66–C104, C73–C97, and C91–C102. Y43, G45, and G47 together coordinate Ca(2+). Residue H63 is part of the active site. D64 contacts Ca(2+). Residue D105 is part of the active site.

Belongs to the phospholipase A2 family. Group II subfamily. D49 sub-subfamily. Requires Ca(2+) as cofactor. As to expression, expressed by the venom gland.

Its subcellular location is the secreted. The enzyme catalyses a 1,2-diacyl-sn-glycero-3-phosphocholine + H2O = a 1-acyl-sn-glycero-3-phosphocholine + a fatty acid + H(+). Functionally, snake venom phospholipase A2 that shows a potent inhibition of human platelet aggregation. This inhibition is concentration-dependent when aggregation is induced by collagen, and concentration-independent when aggregation is induced by arachidonic acid. In human umbilical-cord vein endothelial cells, this toxin stimulates endothelial cells to release prostaglandin I(2), suggesting an increase of its potential anti-platelet activity in vivo. PLA2 catalyzes the calcium-dependent hydrolysis of the 2-acyl groups in 3-sn-phosphoglycerides. The protein is Acidic phospholipase A2 BE-I-PLA2 of Bothrops erythromelas (Caatinga lance head).